The following is a 786-amino-acid chain: uncharacterized protein (786 aa).

361–362 contributes to the substrate binding site; the sequence is WD. Glutamate 488 acts as the Proton donor in catalysis. 590 to 591 serves as a coordination point for substrate; the sequence is KQ. Residues 762 to 786 form a disordered region; sequence TRKPLLPPPPQPPGREPVHRRALAR. Residues 766-776 are compositionally biased toward pro residues; sequence LLPPPPQPPGR.

It belongs to the glycosyl hydrolase 65 family.

This is an uncharacterized protein from Mycobacterium tuberculosis (strain CDC 1551 / Oshkosh).